The chain runs to 257 residues: Type III pantothenate kinase (257 aa).

Asp-5–Lys-12 contacts ATP. Gly-107–Arg-110 lines the substrate pocket. The Proton acceptor role is filled by Asp-109. Residue Thr-133 coordinates ATP.

The protein belongs to the type III pantothenate kinase family. In terms of assembly, homodimer. The cofactor is NH4(+). It depends on K(+) as a cofactor.

The protein resides in the cytoplasm. The catalysed reaction is (R)-pantothenate + ATP = (R)-4'-phosphopantothenate + ADP + H(+). It functions in the pathway cofactor biosynthesis; coenzyme A biosynthesis; CoA from (R)-pantothenate: step 1/5. In terms of biological role, catalyzes the phosphorylation of pantothenate (Pan), the first step in CoA biosynthesis. In Ehrlichia ruminantium (strain Gardel), this protein is Type III pantothenate kinase.